The following is a 210-amino-acid chain: Small ribosomal subunit protein uS3 (210 aa).

One can recognise a KH type-2 domain in the interval 39–107; that stretch reads IREKLMEKLK…EILLDIQEVK (69 aa).

The protein belongs to the universal ribosomal protein uS3 family. As to quaternary structure, part of the 30S ribosomal subunit. Forms a tight complex with proteins S10 and S14.

In terms of biological role, binds the lower part of the 30S subunit head. Binds mRNA in the 70S ribosome, positioning it for translation. The polypeptide is Small ribosomal subunit protein uS3 (Opitutus terrae (strain DSM 11246 / JCM 15787 / PB90-1)).